Consider the following 1405-residue polypeptide: DNA-directed RNA polymerase III subunit rpc1 (1405 aa).

Residues Cys66, Cys69, Cys76, His79, Cys106, Cys109, and Cys153 each coordinate Zn(2+). Residues Asp493, Asp495, and Asp497 each contribute to the Mg(2+) site. Residues Pro838–Glu850 are bridging helix.

The protein belongs to the RNA polymerase beta' chain family. As to quaternary structure, component of the RNA polymerase III (Pol III) complex consisting of 17 subunits.

Its subcellular location is the nucleus. It carries out the reaction RNA(n) + a ribonucleoside 5'-triphosphate = RNA(n+1) + diphosphate. DNA-dependent RNA polymerase catalyzes the transcription of DNA into RNA using the four ribonucleoside triphosphates as substrates. Largest and catalytic core component of RNA polymerase III which synthesizes small RNAs, such as 5S rRNA and tRNAs. Forms the polymerase active center together with the second largest subunit. A single-stranded DNA template strand of the promoter is positioned within the central active site cleft of Pol III. A bridging helix emanates from RPC1 and crosses the cleft near the catalytic site and is thought to promote translocation of Pol III by acting as a ratchet that moves the RNA-DNA hybrid through the active site by switching from straight to bent conformations at each step of nucleotide addition. The sequence is that of DNA-directed RNA polymerase III subunit rpc1 (rpc1) from Schizosaccharomyces pombe (strain 972 / ATCC 24843) (Fission yeast).